Here is a 244-residue protein sequence, read N- to C-terminus: Large ribosomal subunit protein uL30 (244 aa).

The disordered stretch occupies residues 1–37 (MAPTKKVPQVPETVLKRRKQRADARTKAAQHKVTVAA).

Belongs to the universal ribosomal protein uL30 family.

Binds to G-rich structures in 28S rRNA and in mRNAs. Plays a regulatory role in the translation apparatus; inhibits cell-free translation of mRNAs. This chain is Large ribosomal subunit protein uL30 (rpl-7), found in Caenorhabditis elegans.